The chain runs to 160 residues: uncharacterized protein (160 aa).

An RING-type zinc finger spans residues 8–46 (CAVCLDFFVEPCIIECGHSYCRFCIESHLNINEKCPLCR).

This is an uncharacterized protein from Caenorhabditis elegans.